The primary structure comprises 307 residues: Nuclear polyadenylated RNA-binding protein nab2 (307 aa).

The disordered stretch occupies residues 102-135 (STDKSQQSFSVPETSIQPQSSQTPNITSLREEKE). The span at 105-129 (KSQQSFSVPETSIQPQSSQTPNITS) shows a compositional bias: polar residues. C3H1-type zinc fingers lie at residues 178–202 (TQEV…HPTP), 217–232 (CASG…VKGH), and 254–268 (CKYK…RFIH). Positions 274–307 (NMTWRPPSKTEETSLSERSFAVNESEEQLHVPSV) are disordered.

It belongs to the ZC3H14 family.

Its subcellular location is the nucleus. Functionally, RNA-binding protein involved in RNA processing. Acts as a regulator of mRNA stability: binds to mRNAs and pre-mRNAs, preventing their degradation. Involved in the biogenesis of circular RNAs (circRNAs) which are produced by back-splicing circularization of pre-mRNAs. This Schizosaccharomyces pombe (strain 972 / ATCC 24843) (Fission yeast) protein is Nuclear polyadenylated RNA-binding protein nab2.